A 488-amino-acid polypeptide reads, in one-letter code: Katanin p60 ATPase-containing subunit A-like 1 (488 aa).

The disordered stretch occupies residues 84–184 (FPNPVPEEGP…EQKKFDGTGY (101 aa)). Over residues 144 to 167 (KPDRPNTRDGRGNKAKEEKSKRNA) the composition is skewed to basic and acidic residues. 246–253 (GPPGTGKT) contacts ATP.

It belongs to the AAA ATPase family. Katanin p60 subunit A1 subfamily. A-like 1 sub-subfamily.

The protein localises to the cytoplasm. It localises to the cytoskeleton. It is found in the spindle pole. The protein resides in the spindle. The catalysed reaction is n ATP + n H2O + a microtubule = n ADP + n phosphate + (n+1) alpha/beta tubulin heterodimers.. In terms of biological role, regulates microtubule dynamics in Sertoli cells, a process that is essential for spermiogenesis and male fertility. Severs microtubules in an ATP-dependent manner, promoting rapid reorganization of cellular microtubule arrays. The chain is Katanin p60 ATPase-containing subunit A-like 1 (katnal1) from Danio rerio (Zebrafish).